We begin with the raw amino-acid sequence, 59 residues long: Conotoxin ViVA (59 aa).

The signal sequence occupies residues 1–19 (MRCVPVFIILLLLIPSASS). A propeptide spanning residues 20–46 (AAVQPKTEKDDVPLASVHDSALRILSR) is cleaved from the precursor. Glutamine 47 carries the pyrrolidone carboxylic acid modification. Disulfide bonds link cysteine 48–cysteine 55 and cysteine 49–cysteine 56. Isoleucine 58 bears the Isoleucine amide mark.

This sequence belongs to the conotoxin T superfamily. As to expression, expressed by the venom duct.

It localises to the secreted. The polypeptide is Conotoxin ViVA (Conus virgo (Virgin cone)).